The following is a 146-amino-acid chain: Histone H2A.1 (146 aa).

A disordered region spans residues 118–146 (SPAAAEKEAKSPKKKTSTKSPKKKVAAKE). 2 short sequence motifs (SPKK motif) span residues 128-131 (SPKK) and 137-140 (SPKK). The segment covering 129–146 (PKKKTSTKSPKKKVAAKE) has biased composition (basic residues).

Belongs to the histone H2A family. The nucleosome is a histone octamer containing two molecules each of H2A, H2B, H3 and H4 assembled in one H3-H4 heterotetramer and two H2A-H2B heterodimers. The octamer wraps approximately 147 bp of DNA. In terms of processing, phosphorylated within its C-terminal part, probably at the SPKK motifs. As to expression, expressed preferentially in meristematic tissues of young seedlings, in stigma and ovary but not in pollen.

It is found in the nucleus. The protein localises to the chromosome. Core component of nucleosome. Nucleosomes wrap and compact DNA into chromatin, limiting DNA accessibility to the cellular machineries which require DNA as a template. Histones thereby play a central role in transcription regulation, DNA repair, DNA replication and chromosomal stability. DNA accessibility is regulated via a complex set of post-translational modifications of histones, also called histone code, and nucleosome remodeling. The chain is Histone H2A.1 (H2A-9) from Triticum aestivum (Wheat).